Here is a 545-residue protein sequence, read N- to C-terminus: CTP synthase (545 aa).

The amidoligase domain stretch occupies residues 1–266 (MTKNYIFITG…DDYICNYFKL (266 aa)). Serine 14 provides a ligand contact to CTP. UTP is bound at residue serine 14. ATP is bound by residues 15 to 20 (SLGKGI) and aspartate 72. Mg(2+) is bound by residues aspartate 72 and glutamate 140. Residues 147–149 (DIE), 187–192 (KTKPTQ), and lysine 223 contribute to the CTP site. UTP is bound by residues 187–192 (KTKPTQ) and lysine 223. 239 to 241 (KDV) serves as a coordination point for ATP. Residues 291–543 (VIGIIGKYIK…IKSAGKHKKN (253 aa)) enclose the Glutamine amidotransferase type-1 domain. Glycine 352 provides a ligand contact to L-glutamine. Cysteine 379 (nucleophile; for glutamine hydrolysis) is an active-site residue. L-glutamine contacts are provided by residues 380-383 (LGMQ), glutamate 403, and arginine 471. Active-site residues include histidine 516 and glutamate 518.

This sequence belongs to the CTP synthase family. Homotetramer.

It carries out the reaction UTP + L-glutamine + ATP + H2O = CTP + L-glutamate + ADP + phosphate + 2 H(+). The catalysed reaction is L-glutamine + H2O = L-glutamate + NH4(+). The enzyme catalyses UTP + NH4(+) + ATP = CTP + ADP + phosphate + 2 H(+). It participates in pyrimidine metabolism; CTP biosynthesis via de novo pathway; CTP from UDP: step 2/2. Its activity is regulated as follows. Allosterically activated by GTP, when glutamine is the substrate; GTP has no effect on the reaction when ammonia is the substrate. The allosteric effector GTP functions by stabilizing the protein conformation that binds the tetrahedral intermediate(s) formed during glutamine hydrolysis. Inhibited by the product CTP, via allosteric rather than competitive inhibition. Functionally, catalyzes the ATP-dependent amination of UTP to CTP with either L-glutamine or ammonia as the source of nitrogen. Regulates intracellular CTP levels through interactions with the four ribonucleotide triphosphates. The polypeptide is CTP synthase (Buchnera aphidicola subsp. Acyrthosiphon pisum (strain 5A)).